The sequence spans 146 residues: MDLSNLKAAEGSVHSDNFRRGRGHGSGNGKTAGKGHKGQKARSGAPRPGFEGGQMPLYRRLPKRGFKNRNTLTIVPINLSALERFDNDAVVSVETLIEAGIVKNPRDGVKILGNGELTKKLTVQANAFSASAKEKIEALGGKAEVI.

Residues 1–57 (MDLSNLKAAEGSVHSDNFRRGRGHGSGNGKTAGKGHKGQKARSGAPRPGFEGGQMPL) are disordered.

Belongs to the universal ribosomal protein uL15 family. In terms of assembly, part of the 50S ribosomal subunit.

Binds to the 23S rRNA. This chain is Large ribosomal subunit protein uL15, found in Agathobacter rectalis (strain ATCC 33656 / DSM 3377 / JCM 17463 / KCTC 5835 / VPI 0990) (Eubacterium rectale).